Reading from the N-terminus, the 932-residue chain is UPF0182 protein Syncc9902_1151 (932 aa).

The next 9 helical transmembrane spans lie at 4–24 (FLWI…VEWV), 40–60 (MLQL…VLWL), 85–105 (VLMV…DLAI), 124–144 (MASE…VSLC), 151–171 (WVAV…WGVW), 201–221 (IQLG…HAVW), 243–263 (YRWL…LVWL), 293–313 (LLAF…IGHL), and 315–335 (RLLL…TPLT).

This sequence belongs to the UPF0182 family.

It is found in the cell membrane. This chain is UPF0182 protein Syncc9902_1151, found in Synechococcus sp. (strain CC9902).